A 153-amino-acid chain; its full sequence is Aspartate carbamoyltransferase regulatory chain (153 aa).

Positions 109, 114, 138, and 141 each coordinate Zn(2+).

The protein belongs to the PyrI family. As to quaternary structure, contains catalytic and regulatory chains. Requires Zn(2+) as cofactor.

Functionally, involved in allosteric regulation of aspartate carbamoyltransferase. This is Aspartate carbamoyltransferase regulatory chain from Salmonella newport (strain SL254).